The following is a 447-amino-acid chain: Phosphoglucosamine mutase (447 aa).

Ser-101 acts as the Phosphoserine intermediate in catalysis. Ser-101, Asp-242, Asp-244, and Asp-246 together coordinate Mg(2+). At Ser-101 the chain carries Phosphoserine.

This sequence belongs to the phosphohexose mutase family. Mg(2+) is required as a cofactor. In terms of processing, activated by phosphorylation.

It carries out the reaction alpha-D-glucosamine 1-phosphate = D-glucosamine 6-phosphate. In terms of biological role, catalyzes the conversion of glucosamine-6-phosphate to glucosamine-1-phosphate. This is Phosphoglucosamine mutase from Bradyrhizobium diazoefficiens (strain JCM 10833 / BCRC 13528 / IAM 13628 / NBRC 14792 / USDA 110).